We begin with the raw amino-acid sequence, 112 residues long: Gastrula zinc finger protein XlCGF9.1 (112 aa).

C2H2-type zinc fingers lie at residues 6-28, 34-56, 62-84, and 90-112; these read FICSDCGKCFNDSSILIRHMKIH, FCCPQCGRKFRRRAHLIVHERTH, FTCPECGKSFARRSHLMDHRIIH, and YSCPECGKCFGLQGYLNKHFKIH.

This sequence belongs to the krueppel C2H2-type zinc-finger protein family.

It is found in the nucleus. Its function is as follows. May be involved in transcriptional regulation. The sequence is that of Gastrula zinc finger protein XlCGF9.1 from Xenopus laevis (African clawed frog).